Consider the following 421-residue polypeptide: AVAAESSTGTWTTVWTDGLTSLDRYKGRCYHIEPVAGEDNQWICYVAYPLDLFEEGSVTNMFTSIVGNVFGFKALRALRLEDLRIPPTYSKTFQGPPHGIQVERDKLNKYGRPLLGCTIKPKLGLSAKNYGRACYECLRGGLDFTKDDENVNSQPFMRWRDRFVFCAEAIYKSQAETGEIKGHYLNATAGTCEEMIKRAVFARELGVPIVMHDYLTGGFTANTTLRHYCRDNGLLLHIHRAMHAVIDRQKNHGMHFRVLAKALRMSGGDHIHSGTVVGKLEGEREMTLGFVDLLRDDFIEKDRARGIFFTQDWVSMPGVIPVASGGIHVWHMPALTEIFGDDSVLQFGGGTLGHPWGNAPGAAANRVALEACVQARNEGRDLAREGNEIIRAACKWSPELAAACEVWKAIKFEFEPVDTID.

Asn-68 and Thr-118 together coordinate substrate. Lys-120 functions as the Proton acceptor in the catalytic mechanism. Position 122 (Lys-122) interacts with substrate. Positions 146, 148, and 149 each coordinate Mg(2+). Lys-146 carries the post-translational modification N6-carboxylysine. Residue His-239 is the Proton acceptor of the active site. Substrate-binding residues include Arg-240, His-272, and Ser-324.

This sequence belongs to the RuBisCO large chain family. Type I subfamily. Heterohexadecamer of 8 large chains and 8 small chains; disulfide-linked. The disulfide link is formed within the large subunit homodimers. Mg(2+) is required as a cofactor. The disulfide bond which can form in the large chain dimeric partners within the hexadecamer appears to be associated with oxidative stress and protein turnover.

It localises to the plastid. The protein resides in the chloroplast. The enzyme catalyses 2 (2R)-3-phosphoglycerate + 2 H(+) = D-ribulose 1,5-bisphosphate + CO2 + H2O. It carries out the reaction D-ribulose 1,5-bisphosphate + O2 = 2-phosphoglycolate + (2R)-3-phosphoglycerate + 2 H(+). Functionally, ruBisCO catalyzes two reactions: the carboxylation of D-ribulose 1,5-bisphosphate, the primary event in carbon dioxide fixation, as well as the oxidative fragmentation of the pentose substrate in the photorespiration process. Both reactions occur simultaneously and in competition at the same active site. The polypeptide is Ribulose bisphosphate carboxylase large chain (rbcL) (Aegilops crassa (Persian goatgrass)).